The chain runs to 67 residues: uncharacterized protein (67 aa).

This is an uncharacterized protein from Vaccinia virus (strain Copenhagen) (VACV).